A 766-amino-acid chain; its full sequence is Leucine-rich repeat and fibronectin type III domain-containing protein 1 (766 aa).

Residues 1–31 (MAPGPFSSGLLSPPPAALPFLLLLWAGASRG) form the signal peptide. The 34-residue stretch at 32–65 (QPCPGRCICQNVAPTLTMLCAKTGLLFVPPAIDR) folds into the LRRNT domain. Residues 32–536 (QPCPGRCICQ…LRAHFLGGTM (505 aa)) lie on the Extracellular side of the membrane. 7 LRR repeats span residues 66–87 (RVVE…DFAN), 90–111 (SLVH…AFAD), 114–135 (ALRA…QLRG), 138–159 (NLRH…AFDA), 163–184 (TVED…AVGQ), 187–208 (NLNT…TFVQ), and 211–232 (KLVR…GLFL). The N-linked (GlcNAc...) asparagine glycan is linked to asparagine 87. The region spanning 252–298 (NPLHCNCELLWLRRLTREDDLETCATPEHLTDRYFWSIPEEEFLCEP) is the LRRCT domain. In terms of domain architecture, Ig-like spans 299–386 (PLITRQAGGR…GEATAPVEVC (88 aa)). An intrachain disulfide couples cysteine 321 to cysteine 370. Asparagine 343 carries N-linked (GlcNAc...) asparagine glycosylation. The interval 397-422 (PAAPPPLTEPGSSDIATPGRPGANDS) is disordered. Residues 424–520 (TERRLVAAEL…GCVQFTTAGD (97 aa)) enclose the Fibronectin type-III domain. A helical transmembrane segment spans residues 537 to 557 (IIAIGGVIVASVLVFIVLLMI). Residues 558 to 766 (RYKVYGDGDS…STEWMLESTV (209 aa)) lie on the Cytoplasmic side of the membrane. Disordered regions lie at residues 568-601 (RRIK…PPAP) and 646-742 (CLLP…GEDG). Serine 713 bears the Phosphoserine mark. Residues 714–727 (YPRRARRTKRHRST) show a composition bias toward basic residues.

It belongs to the LRFN family. As to quaternary structure, forms heteromeric complexes with LRFN2, LRFN4 and LRFN5; binding to LRFN2 and LRFN5 may be weaker than that to LRFN4. Also interacts with LRFN3. Forms homomeric complexes, but not across cell junctions. Interacts with DLG1, DLG2 and DLG4, but not with MAGI2, not CASK. Interacts with DLG3. Interacts with 2 AMPA receptor subunits GRIA1 and GRIA2 and NMDA receptor subunit GRIN1. Post-translationally, glycosylated. Mainly expressed in brain (at protein level) and testis. In brain, found in cerebral cortex (including pyramidal neurons), hippocampus (including CA3 and CA1 neurons), dentate gyrus, cerebellum (including Purkinje neurons) (at protein level) (at protein level). Also expressed in the olfactory bulb.

It is found in the membrane. The protein resides in the synapse. It localises to the postsynaptic density membrane. Promotes neurite outgrowth in hippocampal neurons. Involved in the regulation of the differentiation and maintenance of excitatory synapses. Induces the clustering of excitatory postsynaptic proteins, including DLG4, DLGAP1, GRIA1 and GRIN1. This Rattus norvegicus (Rat) protein is Leucine-rich repeat and fibronectin type III domain-containing protein 1 (Lrfn1).